The following is a 407-amino-acid chain: Argininosuccinate synthase (407 aa).

ATP-binding positions include 13 to 21 (AYSGGLDTS) and alanine 40. Tyrosine 91 and serine 96 together coordinate L-citrulline. Glycine 121 lines the ATP pocket. 3 residues coordinate L-aspartate: threonine 123, asparagine 127, and aspartate 128. Asparagine 127 is a binding site for L-citrulline. L-citrulline is bound by residues arginine 131, serine 182, serine 191, glutamate 267, and tyrosine 279.

Belongs to the argininosuccinate synthase family. Type 1 subfamily. Homotetramer.

Its subcellular location is the cytoplasm. The catalysed reaction is L-citrulline + L-aspartate + ATP = 2-(N(omega)-L-arginino)succinate + AMP + diphosphate + H(+). It participates in amino-acid biosynthesis; L-arginine biosynthesis; L-arginine from L-ornithine and carbamoyl phosphate: step 2/3. The chain is Argininosuccinate synthase from Mesorhizobium japonicum (strain LMG 29417 / CECT 9101 / MAFF 303099) (Mesorhizobium loti (strain MAFF 303099)).